Here is a 312-residue protein sequence, read N- to C-terminus: MRLKRLSTNHLLSIADLDREDVETVLRVAERFKERYLAGERVIPILEGKTLGLIFEKPSTRTRVSFEVAMHQLGGQAFTYTKQELQLGRGEAIKDTAAVLSRYLDGVMIRARRHEDIEEFARYSEVPVINGLSDLEHPCQALTDAFTIREKLGRGPHTVAFVGDGNNVCSSLALVCATLGWDFVHAVPEGYECPDRVWREVERRAEESGSETRVVRDPKEAVREADVVYTDVWVSMGDEAEREERLRVFRPYQVNEELMSHAPEHAIVMHCMPIQRGYELTDDVADSERSVIYDQAENRLHVQKAILALLMG.

Carbamoyl phosphate-binding positions include 59–62, Q86, R110, and 137–140; these read STRT and HPCQ. L-ornithine contacts are provided by residues N167, D231, and 235 to 236; that span reads SM. Carbamoyl phosphate is bound by residues C271 and R299.

It belongs to the aspartate/ornithine carbamoyltransferase superfamily. OTCase family.

It is found in the cytoplasm. It catalyses the reaction carbamoyl phosphate + L-ornithine = L-citrulline + phosphate + H(+). Its pathway is amino-acid biosynthesis; L-arginine biosynthesis; L-arginine from L-ornithine and carbamoyl phosphate: step 1/3. Reversibly catalyzes the transfer of the carbamoyl group from carbamoyl phosphate (CP) to the N(epsilon) atom of ornithine (ORN) to produce L-citrulline. This is Ornithine carbamoyltransferase from Methanopyrus kandleri (strain AV19 / DSM 6324 / JCM 9639 / NBRC 100938).